The sequence spans 239 residues: MTAYKRVLLKLSGESLMGAQQYGIDPNRLADYASDIKEACAMGVQIGIVIGGGNIFRGVSGAAKGFDRVKGDQMGMLATVINSLALSSALEGVGVKTKVLTAVRMEPIGEFYNKWHAIELLEQGYVTIFSCGTGNPFFTTDTGSSLRGIEIEADAMLKGTRVDGIYTADPEKDPSATKFDRITYDEIYARGLKVMDLTATAMCMENNLPIVVFDMDTPGNLLKVLRGEKIGTYVSNTSA.

Lysine 10 to glycine 13 serves as a coordination point for ATP. Residue glycine 52 coordinates UMP. Positions 53 and 57 each coordinate ATP. UMP-binding positions include aspartate 72 and threonine 133–threonine 140. The ATP site is built by threonine 160, tyrosine 166, and aspartate 169.

It belongs to the UMP kinase family. In terms of assembly, homohexamer.

The protein localises to the cytoplasm. The enzyme catalyses UMP + ATP = UDP + ADP. Its pathway is pyrimidine metabolism; CTP biosynthesis via de novo pathway; UDP from UMP (UMPK route): step 1/1. Inhibited by UTP. Functionally, catalyzes the reversible phosphorylation of UMP to UDP. The sequence is that of Uridylate kinase from Porphyromonas gingivalis (strain ATCC BAA-308 / W83).